Reading from the N-terminus, the 624-residue chain is Actin-related protein 8 (624 aa).

Residue Met-1 is modified to N-acetylmethionine. The segment covering 1 to 25 (MTQAEKGDAENGKEKGGEKEKEQRG) has biased composition (basic and acidic residues). The disordered stretch occupies residues 1-29 (MTQAEKGDAENGKEKGGEKEKEQRGVKRP). ATP contacts are provided by Ser-55 and Thr-56. The residue at position 132 (Ser-132) is a Phosphoserine. 283 to 286 (DVGD) is a binding site for ATP. Ser-412 is modified (phosphoserine). The segment at 430-460 (SKQEQSAKATADRKSASKPIGFEGDLRGQSS) is disordered.

It belongs to the actin family. ARP8 subfamily. Component of the chromatin remodeling INO80 complex; specifically part of a complex module associated with the DBINO domain of INO80. Exists as monomers and dimers, but the dimer is most probably the biologically relevant form required for stable interactions with histones that exploits the twofold symmetry of the nucleosome core.

It localises to the nucleus. Its subcellular location is the chromosome. Plays an important role in the functional organization of mitotic chromosomes. Exhibits low basal ATPase activity, and unable to polymerize. Functionally, proposed core component of the chromatin remodeling INO80 complex which is involved in transcriptional regulation, DNA replication and probably DNA repair. Required for the recruitment of INO80 (and probably the INO80 complex) to sites of DNA damage Strongly prefer nucleosomes and H3-H4 tetramers over H2A-H2B dimers, suggesting it may act as a nucleosome recognition module within the complex. The protein is Actin-related protein 8 (ACTR8) of Ailuropoda melanoleuca (Giant panda).